Reading from the N-terminus, the 61-residue chain is Large ribosomal subunit protein uL30 (61 aa).

The protein belongs to the universal ribosomal protein uL30 family. As to quaternary structure, part of the 50S ribosomal subunit.

The protein is Large ribosomal subunit protein uL30 of Legionella pneumophila (strain Paris).